The primary structure comprises 378 residues: MVSWKGIYFVVALFLGSFFGSIFMLGPFLPLMFISPAWYRWITDRIVATWLTLPVALLEMVFGAKVVVTGDGFIPGERSVIIMNHRTRMDWMFLWNCLLRYSYLRLEKICLKSSLKSIPGFGWAMQVAAFIFIQRKWEDDKSHFENMLHYFCDIHEPLQLLIFPEGTDLTANTKARSNDFAEKNGLRKYEYVLHPRTTGFTFVVECLREGNNLDAIHDITVAYPQNIPQTEKHLLNGNFPKEIHFHVQRYPIETVPTSKEELQLWCQKRWEEKEERLRRFYEGGKCFDETGQSIIPPCKSELRVLAVKCISLLYWTVFPMGTFALLYLYSFARWYFAAMIIIFVAQQKIFGGLELIELACHQYFKKQQKHDDTKMKKK.

2 helical membrane passes run 9–29 (FVVA…GPFL) and 46–66 (IVAT…GAKV). The HXXXXD motif motif lies at 85–90 (HRTRMD). A run of 2 helical transmembrane segments spans residues 302-322 (LRVL…PMGT) and 336-358 (FAAM…LIEL).

This sequence belongs to the 1-acyl-sn-glycerol-3-phosphate acyltransferase family.

Its subcellular location is the endoplasmic reticulum membrane. The enzyme catalyses a 1-acyl-sn-glycero-3-phosphate + an acyl-CoA = a 1,2-diacyl-sn-glycero-3-phosphate + CoA. It catalyses the reaction a 1-acyl-sn-glycero-3-phospho-(1D-myo-inositol) + an acyl-CoA = a 1,2-diacyl-sn-glycero-3-phospho-(1D-myo-inositol) + CoA. The catalysed reaction is 1-acyl-sn-glycero-3-phospho-(1'-sn-glycerol) + an acyl-CoA = a 1,2-diacyl-sn-glycero-3-phospho-(1'-sn-glycerol) + CoA. It carries out the reaction 1-hexadecanoyl-sn-glycero-3-phosphate + (9Z)-octadecenoyl-CoA = 1-hexadecanoyl-2-(9Z-octadecenoyl)-sn-glycero-3-phosphate + CoA. The enzyme catalyses 1-(9Z-octadecenoyl)-sn-glycero-3-phosphate + (9Z)-octadecenoyl-CoA = 1,2-di-(9Z-octadecenoyl)-sn-glycero-3-phosphate + CoA. It catalyses the reaction 1-(9Z,12Z)-octadecadienoyl-sn-glycero-3-phosphate + (9Z)-octadecenoyl-CoA = 1-(9Z,12Z)-octadecadienoyl-2-(9Z)-octadecenoyl-sn-glycero-3-phosphate + CoA. The catalysed reaction is 1-(9Z,12Z,15Z)-octadecatrienoyl-sn-glycero-3-phosphate + (9Z)-octadecenoyl-CoA = 1-(9Z,12Z,15Z)-octadecatrienoyl-2-(9Z)-octadecenoyl-sn-glycero-3-phosphate + CoA. It carries out the reaction 1-(9Z-octadecenoyl)-sn-glycero-3-phosphate + hexadecanoyl-CoA = 1-(9Z)-octadecenoyl-2-hexadecanoyl-sn-glycero-3-phosphate + CoA. The enzyme catalyses 1-(9Z-octadecenoyl)-sn-glycero-3-phosphate + octadecanoyl-CoA = 1-(9Z-octadecenoyl)-2-octadecanoyl-sn-glycero-3-phosphate + CoA. It catalyses the reaction 1-acyl-sn-glycero-3-phospho-(1'-sn-glycerol) + (9Z)-octadecenoyl-CoA = 1-acyl-2-(9Z-octadecenoyl)-sn-glycero-3-phospho-(1'-sn-glycerol) + CoA. The catalysed reaction is a 1-acyl-sn-glycero-3-phospho-(1D-myo-inositol) + (9Z)-octadecenoyl-CoA = a 1-acyl-2-(9Z-octadecenoyl)-sn-glycero-3-phospho-(1D-myo-inositol) + CoA. It carries out the reaction 1-hexadecanoyl-sn-glycero-3-phospho-(1D-myo-inositol) + hexadecanoyl-CoA = 1,2-dihexadecanoyl-sn-glycero-3-phospho-(1D-myo-inositol) + CoA. The enzyme catalyses 1-hexadecanoyl-sn-glycero-3-phospho-(1D-myo-inositol) + octadecanoyl-CoA = 1-hexadecanoyl-2-octadecanoyl-sn-glycero-3-phospho-(1D-myo-inositol) + CoA. It catalyses the reaction 1-hexadecanoyl-sn-glycero-3-phospho-(1D-myo-inositol) + (9Z)-octadecenoyl-CoA = 1-hexadecanoyl-2-(9Z-octadecenoyl)-sn-glycero-3-phospho-(1D-myo-inositol) + CoA. The catalysed reaction is 1-hexadecanoyl-sn-glycero-3-phospho-(1D-myo-inositol) + (9Z,12Z)-octadecadienoyl-CoA = 1-hexadecanoyl-2-(9Z,12Z-octadecadienoyl)-sn-glycero-3-phospho-(1D-myo-inositol) + CoA. It carries out the reaction 1-hexadecanoyl-sn-glycero-3-phospho-(1D-myo-inositol) + (5Z,8Z,11Z,14Z)-eicosatetraenoyl-CoA = 1-hexadecanoyl-2-(5Z,8Z,11Z,14Z-eicosatetraenoyl)-sn-glycero-3-phospho-D-myo-inositol + CoA. The enzyme catalyses 1-hexadecanoyl-sn-glycero-3-phospho-(1'-sn-glycerol) + hexadecanoyl-CoA = 1,2-dihexadecanoyl-sn-glycero-3-phospho-(1'-sn-glycerol) + CoA. It catalyses the reaction 1-hexadecanoyl-sn-glycero-3-phospho-(1'-sn-glycerol) + octadecanoyl-CoA = 1-hexadecanoyl-2-octadecanoyl-sn-glycero-3-phospho-(1'-sn-glycerol) + CoA. The catalysed reaction is 1-hexadecanoyl-sn-glycero-3-phospho-(1'-sn-glycerol) + (9Z)-octadecenoyl-CoA = 1-hexadecanoyl-2-(9Z-octadecenoyl)-sn-glycero-3-phospho-(1'-sn-glycerol) + CoA. It carries out the reaction 1-hexadecanoyl-sn-glycero-3-phospho-(1'-sn-glycerol) + (9Z,12Z)-octadecadienoyl-CoA = 1-hexadecanoyl-2-(9Z,12Z-octadecadienoyl)-sn-glycero-3-phospho-(1'-sn-glycerol) + CoA. The enzyme catalyses 1-tetradecanoyl-sn-glycero-3-phospho-(1'-sn-glycerol) + (9Z)-octadecenoyl-CoA = 1-tetradecanoyl-2-(9Z-octadecenoyl)-sn-glycero-3-phospho-(1'-sn-glycerol) + CoA. It catalyses the reaction 1-octadecanoyl-sn-glycero-3-phospho-(1'-sn-glycerol) + (9Z)-octadecenoyl-CoA = 1-octadecanoyl-2-(9Z-octadecenoyl)-sn-glycero-3-phospho-(1'-sn-glycerol) + CoA. The catalysed reaction is 1-(9Z-octadecenoyl)-sn-glycero-3-phospho-(1'-sn-glycerol) + (9Z)-octadecenoyl-CoA = 1,2-di-(9Z-octadecenoyl)-sn-glycero-3-phospho-(1'-sn-glycerol) + CoA. It carries out the reaction 1-hexadecanoyl-sn-glycero-3-phospho-(1D-myo-inositol) + dodecanoyl-CoA = 1-hexadecanoyl-2-dodecanoyl-sn-glycero-3-phospho-(1D-myo-inositol) + CoA. The enzyme catalyses 1',3'-bis-[1-acyl-sn-glycero-3-phospho]-glycerol + (9Z)-octadecenoyl-CoA = 1'-[1-acyl-2-(9Z)-octadecenoyl-sn-glycero-3-phospho],3'-[1-acyl,2-hydroxy-sn-glycero-3-phospho]-glycerol + CoA. It catalyses the reaction 1'-[1,2-diacyl-sn-glycero-3-phospho],3'-[1-acyl-sn-glycero-3-phospho]-glycerol + (9Z)-octadecenoyl-CoA = 1'-[1,2-diacyl-sn-glycero-3-phospho],3'-[1-acyl,2-(9Z)-octadecenoyl-sn-glycero-3-phospho]-glycerol + CoA. The catalysed reaction is 1'-[1,2-diacyl-sn-glycero-3-phospho],3'-[1-acyl-sn-glycero-3-phospho]-glycerol + (9Z,12Z)-octadecadienoyl-CoA = 1'-[1,2-diacyl-sn-glycero-3-phospho],3'-[1-acyl,2-(9Z,12Z)-octadecadienoyl-sn-glycero-3-phospho]-glycerol + CoA. It carries out the reaction 1'-[1,2-diacyl-sn-glycero-3-phospho],3'-[1-acyl-sn-glycero-3-phospho]-glycerol + dodecanoyl-CoA = 1'-[1,2-diacyl-sn-glycero-3-phospho],3'-[1-acyl,2-dodecanoyl-sn-glycero-3-phospho]-glycerol + CoA. The enzyme catalyses 1',3'-bis-[1-acyl-sn-glycero-3-phospho]-glycerol + dodecanoyl-CoA = 1'-[1-acyl-2-dodecanoyl-sn-glycero-3-phospho],3'-[1-acyl,2-hydroxy-sn-glycero-3-phospho]-glycerol + CoA. It catalyses the reaction a 1-acyl-sn-glycero-3-phosphate + (9Z)-octadecenoyl-CoA = a 1-acyl-2-(9Z-octadecenoyl)-sn-glycero-3-phosphate + CoA. The catalysed reaction is 1',3'-bis-[1-acyl-sn-glycero-3-phospho]-glycerol + (9Z,12Z)-octadecadienoyl-CoA = 1'-[1-acyl-2-(9Z,12Z)-octadecadienoyl-sn-glycero-3-phospho],3'-[1-acyl,2-hydroxy-sn-glycero-3-phospho]-glycerol + CoA. It carries out the reaction 1',3'-bis-[1-acyl-sn-glycero-3-phospho]-glycerol + hexadecanoyl-CoA = 1'-[1-acyl-2-hexadecanoyl-sn-glycero-3-phospho],3'-[1-acyl,2-hydroxy-sn-glycero-3-phospho]-glycerol + CoA. The enzyme catalyses 1',3'-bis-[1-acyl-sn-glycero-3-phospho]-glycerol + octadecanoyl-CoA = 1'-[1-acyl-2-octadecanoyl-sn-glycero-3-phospho],3'-[1-acyl,2-hydroxy-sn-glycero-3-phospho]-glycerol + CoA. It catalyses the reaction 1'-[1,2-diacyl-sn-glycero-3-phospho],3'-[1-acyl-sn-glycero-3-phospho]-glycerol + octanoyl-CoA = 1'-[1,2-diacyl-sn-glycero-3-phospho],3'-[1-acyl,2-octanoyl-sn-glycero-3-phospho]-glycerol + CoA. The catalysed reaction is 1',3'-bis-[1-acyl-sn-glycero-3-phospho]-glycerol + octanoyl-CoA = 1'-[1-acyl-2-octanoyl-sn-glycero-3-phospho],3'-[1-acyl,2-hydroxy-sn-glycero-3-phospho]-glycerol + CoA. It carries out the reaction 1'-[1,2-diacyl-sn-glycero-3-phospho],3'-[1-acyl-sn-glycero-3-phospho]-glycerol + hexadecanoyl-CoA = 1'-[1,2-diacyl-sn-glycero-3-phospho],3'-[1-acyl,2-hexadecanoyl-sn-glycero-3-phospho]-glycerol + CoA. The enzyme catalyses 1'-[1,2-diacyl-sn-glycero-3-phospho],3'-[1-acyl-sn-glycero-3-phospho]-glycerol + (5Z,8Z,11Z,14Z)-eicosatetraenoyl-CoA = 1'-[1,2-diacyl-sn-glycero-3-phospho],3'-[1-acyl,2-(5Z,8Z,11Z,14Z)-eicosatetraenoyl-sn-glycero-3-phospho]-glycerol + CoA. It catalyses the reaction 1',3'-bis-[1-acyl-sn-glycero-3-phospho]-glycerol + (5Z,8Z,11Z,14Z)-eicosatetraenoyl-CoA = 1'-[1-acyl-2-(5Z,8Z,11Z,14Z)-eicosatetraenoyl-sn-glycero-3-phospho],3'-[1-acyl,2-hydroxy-sn-glycero-3-phospho]-glycerol + CoA. The catalysed reaction is a 1-acyl-sn-glycero-3-phospho-(1D-myo-inositol) + octadecanoyl-CoA = a 1-acyl-2-octadecanoyl-sn-glycero-3-phospho-(1D-myo-inositol) + CoA. It carries out the reaction a 2-acyl-sn-glycero-3-phospho-D-myo-inositol + octadecanoyl-CoA = 1-octadecanoyl-2-acyl-sn-glycero-3-phospho-1D-myo-inositol + CoA. It functions in the pathway phospholipid metabolism; CDP-diacylglycerol biosynthesis; CDP-diacylglycerol from sn-glycerol 3-phosphate: step 2/3. Exhibits acyl-CoA:lysocardiolipin acyltransferase (ALCAT) activity; catalyzes the reacylation of lyso-cardiolipin to cardiolipin (CL), a key step in CL remodeling. Recognizes both monolysocardiolipin and dilysocardiolipin as substrates with a preference for linoleoyl-CoA and oleoyl-CoA as acyl donors. Also exhibits 1-acyl-sn-glycerol-3-phosphate acyltransferase activity (AGPAT) activity; converts 1-acyl-sn-glycerol-3- phosphate (lysophosphatidic acid or LPA) into 1,2-diacyl-sn-glycerol-3- phosphate (phosphatidic acid or PA) by incorporating an acyl moiety at the sn-2 position of the glycerol backbone. Possesses both lysophosphatidylinositol acyltransferase (LPIAT) and lysophosphatidylglycerol acyltransferase (LPGAT) activities. Required for establishment of the hematopoietic and endothelial lineages. In Gallus gallus (Chicken), this protein is Lysocardiolipin acyltransferase 1 (LCLAT1).